Consider the following 142-residue polypeptide: Gonadotropin subunit beta-2 (142 aa).

The signal sequence occupies residues 1–23; sequence MLGLHVGTLISLFLCILLEPIEG. 6 disulfide bridges follow: cysteine 29–cysteine 77, cysteine 43–cysteine 92, cysteine 46–cysteine 130, cysteine 54–cysteine 108, cysteine 58–cysteine 110, and cysteine 113–cysteine 120. N-linked (GlcNAc...) asparagine glycosylation is present at asparagine 33.

It belongs to the glycoprotein hormones subunit beta family. Heterodimer of an alpha and a beta chain.

It localises to the secreted. Functionally, involved in gametogenesis and steroidogenesis. This Oncorhynchus tshawytscha (Chinook salmon) protein is Gonadotropin subunit beta-2 (cgbb).